Reading from the N-terminus, the 385-residue chain is Mannitol-1-phosphate 5-dehydrogenase (385 aa).

3–14 is a binding site for NAD(+); it reads AVHFGAGNIGRG.

Belongs to the mannitol dehydrogenase family.

The enzyme catalyses D-mannitol 1-phosphate + NAD(+) = beta-D-fructose 6-phosphate + NADH + H(+). This is Mannitol-1-phosphate 5-dehydrogenase from Geobacillus thermodenitrificans (strain NG80-2).